The chain runs to 181 residues: Large ribosomal subunit protein uL5 (181 aa).

The protein belongs to the universal ribosomal protein uL5 family. Part of the 50S ribosomal subunit; part of the 5S rRNA/L5/L18/L25 subcomplex. Contacts the 5S rRNA and the P site tRNA. Forms a bridge to the 30S subunit in the 70S ribosome.

Its function is as follows. This is one of the proteins that bind and probably mediate the attachment of the 5S RNA into the large ribosomal subunit, where it forms part of the central protuberance. In the 70S ribosome it contacts protein S13 of the 30S subunit (bridge B1b), connecting the 2 subunits; this bridge is implicated in subunit movement. Contacts the P site tRNA; the 5S rRNA and some of its associated proteins might help stabilize positioning of ribosome-bound tRNAs. The polypeptide is Large ribosomal subunit protein uL5 (Trichodesmium erythraeum (strain IMS101)).